Reading from the N-terminus, the 324-residue chain is Phospho-N-acetylmuramoyl-pentapeptide-transferase (324 aa).

The next 10 membrane-spanning stretches (helical) occupy residues 5–25 (VILF…PILI), 50–70 (GTPT…AIVM), 77–97 (LSAE…LGFL), 117–137 (LIGQ…CHFS), 147–167 (LSID…VGGS), 176–196 (LDGL…ILAW), 203–223 (VAIF…FNAH), 227–247 (VFMG…VAIL), 250–270 (LEIL…SVIL), and 302–322 (VVVT…YIEV).

The protein belongs to the glycosyltransferase 4 family. MraY subfamily. Mg(2+) serves as cofactor.

It localises to the cell membrane. The enzyme catalyses UDP-N-acetyl-alpha-D-muramoyl-L-alanyl-gamma-D-glutamyl-meso-2,6-diaminopimeloyl-D-alanyl-D-alanine + di-trans,octa-cis-undecaprenyl phosphate = di-trans,octa-cis-undecaprenyl diphospho-N-acetyl-alpha-D-muramoyl-L-alanyl-D-glutamyl-meso-2,6-diaminopimeloyl-D-alanyl-D-alanine + UMP. It participates in cell wall biogenesis; peptidoglycan biosynthesis. In terms of biological role, catalyzes the initial step of the lipid cycle reactions in the biosynthesis of the cell wall peptidoglycan: transfers peptidoglycan precursor phospho-MurNAc-pentapeptide from UDP-MurNAc-pentapeptide onto the lipid carrier undecaprenyl phosphate, yielding undecaprenyl-pyrophosphoryl-MurNAc-pentapeptide, known as lipid I. This is Phospho-N-acetylmuramoyl-pentapeptide-transferase from Bacillus velezensis (strain DSM 23117 / BGSC 10A6 / LMG 26770 / FZB42) (Bacillus amyloliquefaciens subsp. plantarum).